We begin with the raw amino-acid sequence, 475 residues long: 7-dehydrocholesterol reductase (475 aa).

The tract at residues 1–21 (MAAKSQPNIPKAKSLDGVTND) is disordered. Serine 14 is modified (phosphoserine). A run of 6 helical transmembrane segments spans residues 40–60 (LASV…FIMA), 154–174 (THLL…TIIF), 177–197 (WIPL…FAMV), 266–286 (VTNA…DFFW), 306–326 (LGWG…LYLV), and 331–351 (QLST…YYIF). NADP(+)-binding positions include lysine 358, arginine 362, leucine 395, tryptophan 400, and 407–408 (NY). Residues 420–440 (LACGGGHLLPYFYIIYMAILL) form a helical membrane-spanning segment. NADP(+) is bound by residues aspartate 447, 451 to 455 (CASKY), and tyrosine 462.

This sequence belongs to the ERG4/ERG24 family. As to quaternary structure, interacts with DHCR24; this interaction regulates DHCR7 activity. Interacts with TMEM147. In terms of tissue distribution, widely expressed. Most abundant in adrenal gland, liver, testis, and brain.

The protein localises to the endoplasmic reticulum membrane. It catalyses the reaction cholesterol + NADP(+) = 7-dehydrocholesterol + NADPH + H(+). The enzyme catalyses 7-dehydrodesmosterol + NADPH + H(+) = desmosterol + NADP(+). The catalysed reaction is 5,6alpha-epoxy-5alpha-cholestan-3beta-ol + H2O = 5alpha-cholestane-3beta,5,6beta-triol. It carries out the reaction 5,6beta-epoxy-5beta-cholestan-3beta-ol + H2O = 5alpha-cholestane-3beta,5,6beta-triol. It functions in the pathway steroid biosynthesis; cholesterol biosynthesis. Its activity is regulated as follows. 7-DHC reductase and cholesterol-5,6-epoxide hydrolase (ChEH) activities are inhibited by tamoxifen and the selective AEBS ligand (4-benzyl-phenoxy)-ethyl-N-pyrrolidine (PBPE). ChEH activity is inhibited by oleic acid. Oxidoreductase that catalyzes the last step of the cholesterol synthesis pathway, which transforms cholesta-5,7-dien-3beta-ol (7-dehydrocholesterol,7-DHC) into cholesterol by reducing the C7-C8 double bond of its sterol core. Can also metabolize cholesta-5,7,24-trien-3beta-ol (7-dehydrodemosterol, 7-DHD) to desmosterol, which is then metabolized by the Delta(24)-sterol reductase (DHCR24) to cholesterol. Modulates ferroptosis (a form of regulated cell death driven by iron-dependent lipid peroxidation) through the metabolic breakdown of the anti-ferroptotic metabolites 7-DHC and 7-DHD which, when accumulated, divert the propagation of peroxyl radical-mediated damage from phospholipid components to its sterol core, protecting plasma and mitochondrial membranes from phospholipid autoxidation. In terms of biological role, component of the microsomal antiestrogen binding site (AEBS), a multiproteic complex at the ER membrane that consists of an association between cholestenol Delta-isomerase/EBP and DHCR7. This complex is responsible for cholesterol-5,6-epoxide hydrolase (ChEH) activity, which consists in the hydration of cholesterol-5,6-epoxides (5,6-EC) into cholestane-3beta,5alpha,6beta-triol (CT). The precise role of each component of this complex has not been described yet. In Homo sapiens (Human), this protein is 7-dehydrocholesterol reductase.